The chain runs to 456 residues: Gamma-aminobutyric acid receptor subunit alpha-1 (456 aa).

An N-terminal signal peptide occupies residues 1–27; sequence MRKSPGLSDCLWAWILLLSTLTGRSYG. Residues 28-253 are Extracellular-facing; it reads QPSLQDELKD…FHLKRKIGYF (226 aa). The N-linked (GlcNAc...) asparagine glycan is linked to asparagine 38. Residue arginine 94 coordinates 4-aminobutanoate. Asparagine 138 carries an N-linked (GlcNAc...) asparagine glycan. A 4-aminobutanoate-binding site is contributed by threonine 157. Residues cysteine 166 and cysteine 180 are joined by a disulfide bond. The chain crosses the membrane as a helical span at residues 254 to 274; it reads VIQTYLPCIMTVILSQVSFWL. Residues 275-279 lie on the Cytoplasmic side of the membrane; that stretch reads NRESV. A helical transmembrane segment spans residues 280-301; it reads PARTVFGVTTVLTMTTLSISAR. Over 302–311 the chain is Extracellular; that stretch reads NSLPKVAYAT. A helical transmembrane segment spans residues 312 to 333; sequence AMDWFIAVCYAFVFSALIEFAT. The Cytoplasmic segment spans residues 334-421; sequence VNYFTKRGYA…TFNSVSKIDR (88 aa). A helical transmembrane segment spans residues 422–441; the sequence is LSRIAFPLLFGIFNLIYWAT. Topologically, residues 442–456 are extracellular; sequence YLNREPQLKAPTPHQ.

This sequence belongs to the ligand-gated ion channel (TC 1.A.9) family. Gamma-aminobutyric acid receptor (TC 1.A.9.5) subfamily. GABRA1 sub-subfamily. In terms of assembly, heteropentamer, formed by a combination of alpha (GABRA1-6), beta (GABRB1-3), gamma (GABRG1-3), delta (GABRD), epsilon (GABRE), rho (GABRR1-3), pi (GABRP) and theta (GABRQ) subunits, each subunit exhibiting distinct physiological and pharmacological properties. Interacts with UBQLN1. Interacts with TRAK1. Interacts with KIF21B. Identified in a complex of 720 kDa composed of LHFPL4, NLGN2, GABRA1, GABRB2, GABRG2 and GABRB3. Interacts with LHFPL4. Interacts with NLGN2. Interacts with SHISA7; interaction leads to the regulation of GABA(A) receptor trafficking, channel deactivation kinetics and pharmacology.

The protein localises to the postsynaptic cell membrane. Its subcellular location is the cell membrane. It is found in the cytoplasmic vesicle membrane. The enzyme catalyses chloride(in) = chloride(out). With respect to regulation, allosterically activated by benzodiazepines, the neuroanesthetic alphaxalone and pentobarbital. Inhibited by the antagonist bicuculline. Potentiated by histamine. Alpha subunit of the heteropentameric ligand-gated chloride channel gated by gamma-aminobutyric acid (GABA), a major inhibitory neurotransmitter in the brain. GABA-gated chloride channels, also named GABA(A) receptors (GABAAR), consist of five subunits arranged around a central pore and contain GABA active binding site(s) located at the alpha and beta subunit interface(s). When activated by GABA, GABAARs selectively allow the flow of chloride anions across the cell membrane down their electrochemical gradient. Alpha-1/GABRA1-containing GABAARs are largely synaptic. Chloride influx into the postsynaptic neuron following GABAAR opening decreases the neuron ability to generate a new action potential, thereby reducing nerve transmission. GABAARs containing alpha-1 and beta-2 or -3 subunits exhibit synaptogenic activity; the gamma-2 subunit being necessary but not sufficient to induce rapid synaptic contacts formation. GABAARs function also as histamine receptor where histamine binds at the interface of two neighboring beta subunits and potentiates GABA response. GABAARs containing alpha, beta and epsilon subunits also permit spontaneous chloride channel activity while preserving the structural information required for GABA-gated openings. Alpha-1-mediated plasticity in the orbitofrontal cortex regulates context-dependent action selection. Together with rho subunits, may also control neuronal and glial GABAergic transmission in the cerebellum. The chain is Gamma-aminobutyric acid receptor subunit alpha-1 (GABRA1) from Pongo abelii (Sumatran orangutan).